The sequence spans 561 residues: Probable xyloglucan galactosyltransferase GT20 (561 aa).

Residues 1–31 lie on the Cytoplasmic side of the membrane; sequence MVSKRKSRTSKTIEDSCIHLCSVFFRFLYYT. A helical; Signal-anchor for type II membrane protein membrane pass occupies residues 32–52; that stretch reads LPALFLFFFLLYLCLSFTTGI. Residues 53–561 are Lumenal-facing; that stretch reads SYNNFHMCIF…LLKKINRSVV (509 aa). N-linked (GlcNAc...) asparagine glycans are attached at residues Asn-87, Asn-253, Asn-277, Asn-418, Asn-421, and Asn-557.

This sequence belongs to the glycosyltransferase 47 family. As to expression, expressed in hydathodes.

Its subcellular location is the golgi apparatus membrane. Functions in xyloglucan synthesis by adding side chains to the xylosylated glucan backbone. Involved in the galactosylation of hemicellulose xyloglucan. This is Probable xyloglucan galactosyltransferase GT20 from Arabidopsis thaliana (Mouse-ear cress).